We begin with the raw amino-acid sequence, 188 residues long: Capsid protein (188 aa).

Belongs to the tymoviruses capsid protein family.

Its subcellular location is the virion. Self-assembles to form a T=3 icosahedral capsid composed of 180 copies of the capsid protein. The capsid encapsulates the single-stranded RNA genome. The polypeptide is Capsid protein (Theobroma cacao (Cacao)).